We begin with the raw amino-acid sequence, 505 residues long: Maturase K (505 aa).

It belongs to the intron maturase 2 family. MatK subfamily.

The protein resides in the plastid. The protein localises to the chloroplast. Its function is as follows. Usually encoded in the trnK tRNA gene intron. Probably assists in splicing its own and other chloroplast group II introns. This Froelichia floridana (Florida snake-cotton) protein is Maturase K.